The primary structure comprises 143 residues: Transcriptional regulator MraZ (143 aa).

2 consecutive SpoVT-AbrB domains span residues 5–47 and 76–119; these read THSP…SQKE and ASDE…DADA.

The protein belongs to the MraZ family. In terms of assembly, forms oligomers.

It is found in the cytoplasm. The protein resides in the nucleoid. This chain is Transcriptional regulator MraZ, found in Paenarthrobacter aurescens (strain TC1).